Reading from the N-terminus, the 426-residue chain is Putative acid phosphatase 1 (426 aa).

Residues 1-18 form the signal peptide; it reads MRVLFYVSILVIIASVHT. Over 19 to 388 the chain is Extracellular; it reads QLISVHVIFR…SEWVMTPLSW (370 aa). The active-site Nucleophile is histidine 29. N-linked (GlcNAc...) asparagine glycosylation is found at asparagine 37 and asparagine 145. Cysteine 133 and cysteine 369 form a disulfide bridge. Aspartate 276 serves as the catalytic Proton donor. A helical membrane pass occupies residues 389-409; it reads IIVAIAILLLIALILMTYFVI. Residues 410-426 are Cytoplasmic-facing; that stretch reads RYKNRSIVNIKKLSLEN.

The protein belongs to the histidine acid phosphatase family.

Its subcellular location is the membrane. It catalyses the reaction a phosphate monoester + H2O = an alcohol + phosphate. The chain is Putative acid phosphatase 1 from Caenorhabditis elegans.